The primary structure comprises 465 residues: Ribosomal oxygenase 2 (465 aa).

The 133-residue stretch at 139–271 (QPQRYKDELW…NSWGDCLLDS (133 aa)) folds into the JmjC domain. Positions 179, 181, and 240 each coordinate Fe cation. Serine 309 carries the phosphoserine modification.

It belongs to the ROX family. MINA53 subfamily. Fe(2+) serves as cofactor. As to expression, predominantly expressed in testis. Expressed at high levels in spleen, thymus, and colon, but barely detectable in brain, skeletal muscle, and seminal vesicle (at protein level).

The protein resides in the nucleus. It localises to the nucleolus. It carries out the reaction L-histidyl-[ribosomal protein uL15] + 2-oxoglutarate + O2 = (3S)-3-hydroxy-L-histidyl-[ribosomal protein uL15] + succinate + CO2. It catalyses the reaction L-histidyl-[protein] + 2-oxoglutarate + O2 = (3S)-3-hydroxy-L-histidyl-[protein] + succinate + CO2. Oxygenase that can act as both a histone lysine demethylase and a ribosomal histidine hydroxylase. Is involved in the demethylation of trimethylated 'Lys-9' on histone H3 (H3K9me3), leading to an increase in ribosomal RNA expression. Also catalyzes the hydroxylation of 60S ribosomal protein L27a on 'His-39'. May play an important role in cell growth and survival. May be involved in ribosome biogenesis, most likely during the assembly process of pre-ribosomal particles. The protein is Ribosomal oxygenase 2 of Mus musculus (Mouse).